Reading from the N-terminus, the 327-residue chain is tRNA-dihydrouridine(20/20a) synthase (327 aa).

FMN is bound by residues 11-13 (PML) and Gln-63. Cys-93 serves as the catalytic Proton donor. Residues Lys-132, His-165, 205–207 (NGG), and 227–228 (GR) contribute to the FMN site.

The protein belongs to the Dus family. DusA subfamily. FMN is required as a cofactor.

The enzyme catalyses 5,6-dihydrouridine(20) in tRNA + NADP(+) = uridine(20) in tRNA + NADPH + H(+). It catalyses the reaction 5,6-dihydrouridine(20) in tRNA + NAD(+) = uridine(20) in tRNA + NADH + H(+). The catalysed reaction is 5,6-dihydrouridine(20a) in tRNA + NADP(+) = uridine(20a) in tRNA + NADPH + H(+). It carries out the reaction 5,6-dihydrouridine(20a) in tRNA + NAD(+) = uridine(20a) in tRNA + NADH + H(+). In terms of biological role, catalyzes the synthesis of 5,6-dihydrouridine (D), a modified base found in the D-loop of most tRNAs, via the reduction of the C5-C6 double bond in target uridines. Specifically modifies U20 and U20a in tRNAs. The protein is tRNA-dihydrouridine(20/20a) synthase of Vibrio cholerae serotype O1 (strain ATCC 39315 / El Tor Inaba N16961).